Consider the following 123-residue polypeptide: Small ribosomal subunit protein uS13 (123 aa).

The interval 95–123 is disordered; it reads GLPVRGQRTKTNARTRKGPARTVAGKKKK.

It belongs to the universal ribosomal protein uS13 family. In terms of assembly, part of the 30S ribosomal subunit. Forms a loose heterodimer with protein S19. Forms two bridges to the 50S subunit in the 70S ribosome.

Functionally, located at the top of the head of the 30S subunit, it contacts several helices of the 16S rRNA. In the 70S ribosome it contacts the 23S rRNA (bridge B1a) and protein L5 of the 50S subunit (bridge B1b), connecting the 2 subunits; these bridges are implicated in subunit movement. Contacts the tRNAs in the A and P-sites. This chain is Small ribosomal subunit protein uS13, found in Heliobacterium modesticaldum (strain ATCC 51547 / Ice1).